The following is a 180-amino-acid chain: ATP synthase subunit delta (180 aa).

The protein belongs to the ATPase delta chain family. In terms of assembly, F-type ATPases have 2 components, F(1) - the catalytic core - and F(0) - the membrane proton channel. F(1) has five subunits: alpha(3), beta(3), gamma(1), delta(1), epsilon(1). F(0) has three main subunits: a(1), b(2) and c(10-14). The alpha and beta chains form an alternating ring which encloses part of the gamma chain. F(1) is attached to F(0) by a central stalk formed by the gamma and epsilon chains, while a peripheral stalk is formed by the delta and b chains.

It is found in the cell inner membrane. Functionally, f(1)F(0) ATP synthase produces ATP from ADP in the presence of a proton or sodium gradient. F-type ATPases consist of two structural domains, F(1) containing the extramembraneous catalytic core and F(0) containing the membrane proton channel, linked together by a central stalk and a peripheral stalk. During catalysis, ATP synthesis in the catalytic domain of F(1) is coupled via a rotary mechanism of the central stalk subunits to proton translocation. In terms of biological role, this protein is part of the stalk that links CF(0) to CF(1). It either transmits conformational changes from CF(0) to CF(1) or is implicated in proton conduction. This is ATP synthase subunit delta from Pelobacter propionicus (strain DSM 2379 / NBRC 103807 / OttBd1).